The chain runs to 393 residues: MSEKEGKVIPETNGMKRPRFDPVKLGLPEEFTLTDYTRLKGCSCKVPQPELLALLQSVSTTPGRRDVGMDCSIVKLQHKDETGKPLYMVSTTDFFFPSVEDPYLQGQIGAANVLSDLYSTGIDRCDTVLMLLAASTDMDKTEREVCTQEMMKGFVDHVRLAGSDVTGGQTVMNPWPLIGGIATSVVAESQMIRPTGLQPGDILVLTKPLGCQIAVNLKQWLRRPSPIFEEQIQGKMDSEEIEELYNAAADGMKRLNRMAAALMHSHGAHGATDVTGFGILGHAKNLGSAQKADVCLVLDSLPMYRGAVKASKLMGDKYRLFEGYAAETSGGLLVAFGTREEAEGYIRELYETDGEPAWVVGRVVRREGSAPYALLQKDYKIIEVGAKVNDKII.

A disordered region spans residues 1 to 21 (MSEKEGKVIPETNGMKRPRFD). Residue C42 is part of the active site. ATP is bound by residues K45, 68–70 (GMD), D93, D116, and 167–170 (GGQT). Position 70 (D70) interacts with Mg(2+). Position 116 (D116) interacts with Mg(2+). Residue D273 coordinates Mg(2+).

This sequence belongs to the selenophosphate synthase 1 family. Class I subfamily. Homodimer. The cofactor is Mg(2+).

The enzyme catalyses hydrogenselenide + ATP + H2O = selenophosphate + AMP + phosphate + 2 H(+). Its function is as follows. Synthesizes selenophosphate from selenide and ATP. The chain is Selenide, water dikinase from Trypanosoma brucei brucei (strain 927/4 GUTat10.1).